A 370-amino-acid polypeptide reads, in one-letter code: Integrin-linked kinase-associated serine/threonine phosphatase 2C (370 aa).

The residue at position 1 (M1) is an N-acetylmethionine. The segment at 1–69 (MDLFGDLPEP…SDEEKNGSEE (69 aa)) is disordered. Residue S13 is modified to Phosphoserine. A compositionally biased stretch (low complexity) spans 33 to 45 (SSGDSGSLDTSLS). Positions 46–69 (EEVKNEGKGAKRKASDEEKNGSEE) are enriched in basic and acidic residues. The 283-residue stretch at 86 to 368 (KGYVAERKGE…DNVTVMVVRI (283 aa)) folds into the PPM-type phosphatase domain. Mn(2+) is bound by residues D130 and G131. Residue K188 is modified to N6-acetyllysine. Positions 304 and 359 each coordinate Mn(2+).

It belongs to the PP2C family. As to quaternary structure, interacts with ILK. Mg(2+) is required as a cofactor. Requires Mn(2+) as cofactor.

It localises to the cytoplasm. It catalyses the reaction O-phospho-L-seryl-[protein] + H2O = L-seryl-[protein] + phosphate. It carries out the reaction O-phospho-L-threonyl-[protein] + H2O = L-threonyl-[protein] + phosphate. Functionally, protein phosphatase that may play a role in regulation of cell cycle progression via dephosphorylation of its substrates whose appropriate phosphorylation states might be crucial for cell proliferation. Selectively associates with integrin linked kinase (ILK), to modulate cell adhesion and growth factor signaling. Inhibits the ILK-GSK3B signaling axis and may play an important role in inhibiting oncogenic transformation. This is Integrin-linked kinase-associated serine/threonine phosphatase 2C (ILKAP) from Bos taurus (Bovine).